A 122-amino-acid chain; its full sequence is Dihydroneopterin aldolase (122 aa).

Residues Glu21, Tyr53, and 72–73 each bind substrate; that span reads VE. Lys98 serves as the catalytic Proton donor/acceptor.

It belongs to the DHNA family. Homooctamer.

It carries out the reaction 7,8-dihydroneopterin = 6-hydroxymethyl-7,8-dihydropterin + glycolaldehyde. The catalysed reaction is 7,8-dihydroneopterin = 7,8-dihydromonapterin. It functions in the pathway cofactor biosynthesis; tetrahydrofolate biosynthesis; 2-amino-4-hydroxy-6-hydroxymethyl-7,8-dihydropteridine diphosphate from 7,8-dihydroneopterin triphosphate: step 3/4. Catalyzes the conversion of 7,8-dihydroneopterin to 6-hydroxymethyl-7,8-dihydropterin. Can use L-threo-dihydroneopterin and D-erythro-dihydroneopterin as substrates for the formation of 6-hydroxymethyldihydropterin, but it can also catalyze the epimerization of carbon 2' of dihydroneopterin to dihydromonapterin at appreciable velocity. The chain is Dihydroneopterin aldolase (folB) from Escherichia coli O6:H1 (strain CFT073 / ATCC 700928 / UPEC).